Reading from the N-terminus, the 886-residue chain is DNA mismatch repair protein MutS (886 aa).

An ATP-binding site is contributed by 626-633 (GPNMGGKS).

This sequence belongs to the DNA mismatch repair MutS family.

In terms of biological role, this protein is involved in the repair of mismatches in DNA. It is possible that it carries out the mismatch recognition step. This protein has a weak ATPase activity. In Burkholderia ambifaria (strain ATCC BAA-244 / DSM 16087 / CCUG 44356 / LMG 19182 / AMMD) (Burkholderia cepacia (strain AMMD)), this protein is DNA mismatch repair protein MutS.